A 137-amino-acid polypeptide reads, in one-letter code: MAKELNPTENIEKLSDIQRYVTQERGTEAPFTGKLLHNKRDGVYQCLCCHQPLFISESKFDSGCGWPSFYQPIDADSIRYIDDYSHNMHRIEIRCGNCDAHLGHVFPDGPQPTGERYCINSASLNFVDDQNGEQTAG.

The 123-residue stretch at 7–129 (PTENIEKLSD…NSASLNFVDD (123 aa)) folds into the MsrB domain. The Zn(2+) site is built by cysteine 46, cysteine 49, cysteine 95, and cysteine 98. Residue cysteine 118 is the Nucleophile of the active site.

The protein belongs to the MsrB Met sulfoxide reductase family. The cofactor is Zn(2+).

It catalyses the reaction L-methionyl-[protein] + [thioredoxin]-disulfide + H2O = L-methionyl-(R)-S-oxide-[protein] + [thioredoxin]-dithiol. The sequence is that of Peptide methionine sulfoxide reductase MsrB from Yersinia pseudotuberculosis serotype O:1b (strain IP 31758).